The primary structure comprises 72 residues: uncharacterized protein (72 aa).

This is an uncharacterized protein from Schizosaccharomyces pombe (strain 972 / ATCC 24843) (Fission yeast).